The chain runs to 332 residues: Tetraacyldisaccharide 4'-kinase (332 aa).

Residue 52–59 coordinates ATP; the sequence is TLGGAGKT.

Belongs to the LpxK family.

The catalysed reaction is a lipid A disaccharide + ATP = a lipid IVA + ADP + H(+). The protein operates within glycolipid biosynthesis; lipid IV(A) biosynthesis; lipid IV(A) from (3R)-3-hydroxytetradecanoyl-[acyl-carrier-protein] and UDP-N-acetyl-alpha-D-glucosamine: step 6/6. In terms of biological role, transfers the gamma-phosphate of ATP to the 4'-position of a tetraacyldisaccharide 1-phosphate intermediate (termed DS-1-P) to form tetraacyldisaccharide 1,4'-bis-phosphate (lipid IVA). In Methylobacterium sp. (strain 4-46), this protein is Tetraacyldisaccharide 4'-kinase.